We begin with the raw amino-acid sequence, 173 residues long: T-cell surface glycoprotein CD3 gamma chain (173 aa).

A signal peptide spans M1–A22. The Extracellular segment spans residues H23 to V111. Residues V24–Q94 form the Ig-like domain. Residues C42 and C83 are joined by a disulfide bond. N-linked (GlcNAc...) asparagine glycans are attached at residues N45 and N88. The chain crosses the membrane as a helical span at residues A112–I132. At A133 to N173 the chain is on the cytoplasmic side. Residue S141 is modified to Phosphoserine. Phosphoserine; by PKC is present on S144. In terms of domain architecture, ITAM spans D145–N173. Residues L149–L150 carry the Di-leucine motif motif.

The TCR-CD3 complex is composed of a CD3D/CD3E and a CD3G/CD3E heterodimers that preferentially associate with TCRalpha and TCRbeta, respectively, to form TCRalpha/CD3E/CD3G and TCRbeta/CD3G/CD3E trimers. In turn, the hexamer interacts with CD3Z homodimer to form the TCR-CD3 complex. Alternatively, TCRalpha and TCRbeta can be replaced by TCRgamma and TCRdelta. In terms of processing, phosphorylated on Tyr residues after T-cell receptor triggering by LCK in association with CD4/CD8. Phosphorylated also by PKC; leading to the TCR complex down-regulation. Post-translationally, phosphorylated on Tyr residues after T-cell receptor triggering by LCK in association with CD4/CD8.

It localises to the cell membrane. Part of the TCR-CD3 complex present on T-lymphocyte cell surface that plays an essential role in adaptive immune response. When antigen presenting cells (APCs) activate T-cell receptor (TCR), TCR-mediated signals are transmitted across the cell membrane by the CD3 chains CD3D, CD3E, CD3G and CD3Z. All CD3 chains contain immunoreceptor tyrosine-based activation motifs (ITAMs) in their cytoplasmic domain. Upon TCR engagement, these motifs become phosphorylated by Src family protein tyrosine kinases LCK and FYN, resulting in the activation of downstream signaling pathways. In addition to this role of signal transduction in T-cell activation, CD3G plays an essential role in the dynamic regulation of TCR expression at the cell surface. Indeed, constitutive TCR cycling is dependent on the di-leucine-based (diL) receptor-sorting motif present in CD3G. This chain is T-cell surface glycoprotein CD3 gamma chain (CD3G), found in Bos taurus (Bovine).